The following is a 633-amino-acid chain: Replication protein E1 (633 aa).

The short motif at 84 to 86 is the Nuclear localization signal element; sequence KRK. 3 positions are modified to phosphoserine; by host: S90, S94, and S108. The short motif at 107-116 is the Nuclear export signal element; that stretch reads LSPRLGAISL. The interval 148–168 is disordered; the sequence is NTEGTDETETDQVQTVSGETT. Positions 158–168 are enriched in polar residues; it reads DQVQTVSGETT. A DNA-binding region region spans residues 169–335; that stretch reads TDSLGRQQIT…QTVIEYSLAD (167 aa). An SF3 helicase domain is found at 434 to 584; that stretch reads VDFISFMIAL…FPFDSNGNPV (151 aa). 460 to 467 serves as a coordination point for ATP; sequence GPPDTGKS. Residue K541 forms a Glycyl lysine isopeptide (Lys-Gly) (interchain with G-Cter in SUMO) linkage. The tract at residues 609 to 633 is disordered; sequence DNEEEENGDPSNTFRCVPGKASRPI.

This sequence belongs to the papillomaviridae E1 protein family. Can form hexamers. Interacts with E2 protein; this interaction increases E1 DNA binding specificity. Interacts with host DNA polymerase subunit POLA2. Interacts with host single stranded DNA-binding protein RPA1. Interacts with host TOP1; this interaction stimulates the enzymatic activity of TOP1. Phosphorylated. In terms of processing, sumoylated.

The protein localises to the host nucleus. It catalyses the reaction Couples ATP hydrolysis with the unwinding of duplex DNA by translocating in the 3'-5' direction.. The catalysed reaction is ATP + H2O = ADP + phosphate + H(+). ATP-dependent DNA 3'-5' helicase required for initiation of viral DNA replication. It forms a complex with the viral E2 protein. The E1-E2 complex binds to the replication origin which contains binding sites for both proteins. During the initial step, a dimer of E1 interacts with a dimer of protein E2 leading to a complex that binds the viral origin of replication with high specificity. Then, a second dimer of E1 displaces the E2 dimer in an ATP-dependent manner to form the E1 tetramer. Following this, two E1 monomers are added to each half of the site, which results in the formation of two E1 trimers on the viral ori. Subsequently, two hexamers will be created. The double hexamer acts as a bi-directional helicase machinery and unwinds the viral DNA and then recruits the host DNA polymerase to start replication. This chain is Replication protein E1, found in Homo sapiens (Human).